Here is a 396-residue protein sequence, read N- to C-terminus: 1-deoxy-D-xylulose 5-phosphate reductoisomerase (396 aa).

The NADPH site is built by threonine 17, glycine 18, serine 19, isoleucine 20, asparagine 47, and asparagine 130. Position 131 (lysine 131) interacts with 1-deoxy-D-xylulose 5-phosphate. An NADPH-binding site is contributed by glutamate 132. Residue aspartate 156 participates in Mn(2+) binding. Positions 157, 158, 182, and 205 each coordinate 1-deoxy-D-xylulose 5-phosphate. Mn(2+) is bound at residue glutamate 158. NADPH is bound at residue glycine 211. 4 residues coordinate 1-deoxy-D-xylulose 5-phosphate: serine 218, asparagine 223, lysine 224, and glutamate 227. Residue glutamate 227 coordinates Mn(2+).

Belongs to the DXR family. It depends on Mg(2+) as a cofactor. The cofactor is Mn(2+).

The catalysed reaction is 2-C-methyl-D-erythritol 4-phosphate + NADP(+) = 1-deoxy-D-xylulose 5-phosphate + NADPH + H(+). It functions in the pathway isoprenoid biosynthesis; isopentenyl diphosphate biosynthesis via DXP pathway; isopentenyl diphosphate from 1-deoxy-D-xylulose 5-phosphate: step 1/6. Its function is as follows. Catalyzes the NADPH-dependent rearrangement and reduction of 1-deoxy-D-xylulose-5-phosphate (DXP) to 2-C-methyl-D-erythritol 4-phosphate (MEP). The protein is 1-deoxy-D-xylulose 5-phosphate reductoisomerase of Rhizobium etli (strain ATCC 51251 / DSM 11541 / JCM 21823 / NBRC 15573 / CFN 42).